The primary structure comprises 218 residues: Cytochrome b6 (218 aa).

A helical transmembrane segment spans residues 35 to 55 (IFYCLGGITLVCFLIQFATGF). C38 provides a ligand contact to heme c. The heme b site is built by H89 and H103. Transmembrane regions (helical) follow at residues 93–113 (ASMM…TGGF), 119–139 (LTWV…VTGY), and 189–209 (LHTF…FLMI). Heme b is bound by residues H190 and H205.

Belongs to the cytochrome b family. PetB subfamily. The 4 large subunits of the cytochrome b6-f complex are cytochrome b6, subunit IV (17 kDa polypeptide, PetD), cytochrome f and the Rieske protein, while the 4 small subunits are PetG, PetL, PetM and PetN. The complex functions as a dimer. It depends on heme b as a cofactor. Heme c is required as a cofactor.

It localises to the cellular thylakoid membrane. Component of the cytochrome b6-f complex, which mediates electron transfer between photosystem II (PSII) and photosystem I (PSI), cyclic electron flow around PSI, and state transitions. The protein is Cytochrome b6 of Synechococcus sp. (strain CC9311).